Here is a 419-residue protein sequence, read N- to C-terminus: Gamma-glutamyl phosphate reductase (419 aa).

It belongs to the gamma-glutamyl phosphate reductase family.

Its subcellular location is the cytoplasm. It catalyses the reaction L-glutamate 5-semialdehyde + phosphate + NADP(+) = L-glutamyl 5-phosphate + NADPH + H(+). It functions in the pathway amino-acid biosynthesis; L-proline biosynthesis; L-glutamate 5-semialdehyde from L-glutamate: step 2/2. In terms of biological role, catalyzes the NADPH-dependent reduction of L-glutamate 5-phosphate into L-glutamate 5-semialdehyde and phosphate. The product spontaneously undergoes cyclization to form 1-pyrroline-5-carboxylate. In Mannheimia succiniciproducens (strain KCTC 0769BP / MBEL55E), this protein is Gamma-glutamyl phosphate reductase.